The chain runs to 261 residues: 5'-nucleotidase SurE (261 aa).

Positions 17, 18, 48, and 104 each coordinate a divalent metal cation.

It belongs to the SurE nucleotidase family. Requires a divalent metal cation as cofactor.

The protein resides in the cytoplasm. It catalyses the reaction a ribonucleoside 5'-phosphate + H2O = a ribonucleoside + phosphate. Its function is as follows. Nucleotidase that shows phosphatase activity on nucleoside 5'-monophosphates. This Deinococcus geothermalis (strain DSM 11300 / CIP 105573 / AG-3a) protein is 5'-nucleotidase SurE.